Here is a 239-residue protein sequence, read N- to C-terminus: Protein GrpE (239 aa).

Disordered regions lie at residues 1–54 and 208–239; these read MIEN…ELKN and SMGPGKQNSQEEVEKDKVEGDIDSEENTSEDV. Polar residues predominate over residues 19-42; it reads QDNALENVSSAQELTTENNELSSQ. Over residues 43–53 the composition is skewed to basic and acidic residues; the sequence is KTEEINTEELK. Positions 228–239 are enriched in acidic residues; that stretch reads DIDSEENTSEDV.

Belongs to the GrpE family. In terms of assembly, homodimer.

The protein resides in the cytoplasm. Its function is as follows. Participates actively in the response to hyperosmotic and heat shock by preventing the aggregation of stress-denatured proteins, in association with DnaK and GrpE. It is the nucleotide exchange factor for DnaK and may function as a thermosensor. Unfolded proteins bind initially to DnaJ; upon interaction with the DnaJ-bound protein, DnaK hydrolyzes its bound ATP, resulting in the formation of a stable complex. GrpE releases ADP from DnaK; ATP binding to DnaK triggers the release of the substrate protein, thus completing the reaction cycle. Several rounds of ATP-dependent interactions between DnaJ, DnaK and GrpE are required for fully efficient folding. The sequence is that of Protein GrpE from Prochlorococcus marinus (strain AS9601).